A 264-amino-acid chain; its full sequence is Indole-3-glycerol phosphate synthase (264 aa).

The protein belongs to the TrpC family.

It catalyses the reaction 1-(2-carboxyphenylamino)-1-deoxy-D-ribulose 5-phosphate + H(+) = (1S,2R)-1-C-(indol-3-yl)glycerol 3-phosphate + CO2 + H2O. It functions in the pathway amino-acid biosynthesis; L-tryptophan biosynthesis; L-tryptophan from chorismate: step 4/5. This Xylella fastidiosa (strain M23) protein is Indole-3-glycerol phosphate synthase.